The following is a 407-amino-acid chain: UPF0597 protein NAMH_0191 (407 aa).

Belongs to the UPF0597 family.

This Nautilia profundicola (strain ATCC BAA-1463 / DSM 18972 / AmH) protein is UPF0597 protein NAMH_0191.